Here is a 33-residue protein sequence, read N- to C-terminus: Photosystem II reaction center protein Psb30 (33 aa).

Residues 5–25 (VIAQLIALALIVGSGPLVIAL) form a helical membrane-spanning segment.

Belongs to the Psb30/Ycf12 family. As to quaternary structure, PSII is composed of 1 copy each of membrane proteins PsbA, PsbB, PsbC, PsbD, PsbE, PsbF, PsbH, PsbI, PsbJ, PsbK, PsbL, PsbM, PsbT, PsbX, PsbY, PsbZ, Psb30/Ycf12, peripheral proteins of the oxygen-evolving complex and a large number of cofactors. It forms dimeric complexes.

The protein resides in the plastid. It is found in the chloroplast thylakoid membrane. A core subunit of photosystem II (PSII), probably helps stabilize the reaction center. The sequence is that of Photosystem II reaction center protein Psb30 from Physcomitrium patens (Spreading-leaved earth moss).